Consider the following 179-residue polypeptide: MKSSLKPVEKYAYSIFEIAKEEKKLDLYKHNLETINSIIEEVPAFFEAVGDPARDRNERKQIVIKNLEGEIDIYLISLIDLLIDVKSIKLLKKIVLKALDFVNEALSVKKVLITTAYELTKNQIDRLVQSLKKKYACEKIEPIVVVDKSIIGGLSINFESQVLDNSLKTKLFNVVKKTN.

The protein belongs to the ATPase delta chain family. In terms of assembly, F-type ATPases have 2 components, F(1) - the catalytic core - and F(0) - the membrane proton channel. F(1) has five subunits: alpha(3), beta(3), gamma(1), delta(1), epsilon(1). F(0) has three main subunits: a(1), b(2) and c(10-14). The alpha and beta chains form an alternating ring which encloses part of the gamma chain. F(1) is attached to F(0) by a central stalk formed by the gamma and epsilon chains, while a peripheral stalk is formed by the delta and b chains.

It localises to the cell membrane. F(1)F(0) ATP synthase produces ATP from ADP in the presence of a proton or sodium gradient. F-type ATPases consist of two structural domains, F(1) containing the extramembraneous catalytic core and F(0) containing the membrane proton channel, linked together by a central stalk and a peripheral stalk. During catalysis, ATP synthesis in the catalytic domain of F(1) is coupled via a rotary mechanism of the central stalk subunits to proton translocation. In terms of biological role, this protein is part of the stalk that links CF(0) to CF(1). It either transmits conformational changes from CF(0) to CF(1) or is implicated in proton conduction. This Ureaplasma urealyticum serovar 10 (strain ATCC 33699 / Western) protein is ATP synthase subunit delta.